The chain runs to 179 residues: MIP18 family protein C144.16 (179 aa).

Positions 1-26 (MSANLQNENPEVKELNQLPSRVEEEE) are disordered.

It belongs to the MIP18 family.

Functionally, may play a role in chromosome segregation through establishment of sister chromatid cohesion. This is MIP18 family protein C144.16 from Schizosaccharomyces pombe (strain 972 / ATCC 24843) (Fission yeast).